The primary structure comprises 860 residues: Glucans biosynthesis glucosyltransferase H (860 aa).

6 helical membrane-spanning segments follow: residues 146 to 166 (ILLI…KGIL), 200 to 220 (ILLL…TALM), 519 to 539 (VFLT…FLVL), 576 to 596 (LFST…ILIW), 610 to 630 (TVSM…RMLF), and 686 to 706 (FLWW…VSVI).

The protein belongs to the glycosyltransferase 2 family. OpgH subfamily.

Its subcellular location is the cell inner membrane. Its pathway is glycan metabolism; osmoregulated periplasmic glucan (OPG) biosynthesis. Its function is as follows. Involved in the biosynthesis of osmoregulated periplasmic glucans (OPGs). This is Glucans biosynthesis glucosyltransferase H from Pseudomonas savastanoi pv. phaseolicola (strain 1448A / Race 6) (Pseudomonas syringae pv. phaseolicola (strain 1448A / Race 6)).